Reading from the N-terminus, the 637-residue chain is 1-deoxy-D-xylulose-5-phosphate synthase (637 aa).

Thiamine diphosphate-binding positions include His-72 and 113–115 (GHA). Asp-144 contacts Mg(2+). Thiamine diphosphate is bound by residues 145–146 (GA), Asn-174, Tyr-287, and Glu-370. A Mg(2+)-binding site is contributed by Asn-174.

It belongs to the transketolase family. DXPS subfamily. As to quaternary structure, homodimer. It depends on Mg(2+) as a cofactor. Thiamine diphosphate serves as cofactor.

The enzyme catalyses D-glyceraldehyde 3-phosphate + pyruvate + H(+) = 1-deoxy-D-xylulose 5-phosphate + CO2. It functions in the pathway metabolic intermediate biosynthesis; 1-deoxy-D-xylulose 5-phosphate biosynthesis; 1-deoxy-D-xylulose 5-phosphate from D-glyceraldehyde 3-phosphate and pyruvate: step 1/1. In terms of biological role, catalyzes the acyloin condensation reaction between C atoms 2 and 3 of pyruvate and glyceraldehyde 3-phosphate to yield 1-deoxy-D-xylulose-5-phosphate (DXP). This chain is 1-deoxy-D-xylulose-5-phosphate synthase, found in Prochlorococcus marinus subsp. pastoris (strain CCMP1986 / NIES-2087 / MED4).